We begin with the raw amino-acid sequence, 440 residues long: GTPase Obg (440 aa).

The 159-residue stretch at 5-163 (STFVDQTKIE…RTLRLELKVL (159 aa)) folds into the Obg domain. Residues 164–338 (ADVGLVGFPS…LMSRAADLVS (175 aa)) form the OBG-type G domain. Residues 170–177 (GFPSVGKS), 195–199 (FTTLK), 217–220 (DLPG), 288–291 (SQMD), and 319–321 (SSV) contribute to the GTP site. Residues Ser-177 and Thr-197 each coordinate Mg(2+). Residues 362–440 (YHRPEKMEFT…IGDFSFEFVQ (79 aa)) enclose the OCT domain.

Belongs to the TRAFAC class OBG-HflX-like GTPase superfamily. OBG GTPase family. As to quaternary structure, monomer. The cofactor is Mg(2+).

It localises to the cytoplasm. Its function is as follows. An essential GTPase which binds GTP, GDP and possibly (p)ppGpp with moderate affinity, with high nucleotide exchange rates and a fairly low GTP hydrolysis rate. Plays a role in control of the cell cycle, stress response, ribosome biogenesis and in those bacteria that undergo differentiation, in morphogenesis control. The protein is GTPase Obg of Lactobacillus delbrueckii subsp. bulgaricus (strain ATCC 11842 / DSM 20081 / BCRC 10696 / JCM 1002 / NBRC 13953 / NCIMB 11778 / NCTC 12712 / WDCM 00102 / Lb 14).